A 198-amino-acid polypeptide reads, in one-letter code: Snake venom metalloproteinase BpirMP (198 aa).

The Peptidase M12B domain maps to 1–197 (TYIEVAVVAD…HNPQCILNEP (197 aa)). Ca(2+) contacts are provided by glutamate 4 and aspartate 88. Cystine bridges form between cysteine 112-cysteine 192, cysteine 152-cysteine 176, and cysteine 154-cysteine 159. Position 137 (histidine 137) interacts with Zn(2+). The active site involves glutamate 138. The Zn(2+) site is built by histidine 141 and histidine 147. 2 residues coordinate Ca(2+): cysteine 192 and asparagine 195.

This sequence belongs to the venom metalloproteinase (M12B) family. P-I subfamily. Monomer. It depends on Zn(2+) as a cofactor. Expressed by the venom gland.

The protein localises to the secreted. Inhibited by the chelating agents EDTA, EGTA and 1,10-phenanthroline. Is not inhibited by serine proteinase inhibitors aprotinin, leupeptin and benzamidine. In terms of biological role, zinc metalloprotease that preferentially degrades Aalpha chain of fibrinogen (FGA) (at a dose of 5 ug, whereas at a dose of 10 ug, both FGA and FGB are completely degraded). Degrades fibrin gel in a dose-dependent manner, as well blood clots formed in vitro (thrombolytic activity). Induces hemorrhage (in the dorsal skin of mice), with an MHD of 50 ug. The basal membrane components collagen (all chains of type IV) (COL4A4), fibronectin (FN1), laminin and nidogen are all degraded by this toxin. This chain is Snake venom metalloproteinase BpirMP, found in Bothrops pirajai (Piraja's lancehead).